The chain runs to 608 residues: Kinetochore protein NUF2 (608 aa).

The interval 121-125 (IGNLR) is required for nuclear localization and function. 2 coiled-coil regions span residues 176 to 319 (FESQ…QQKL) and 358 to 460 (REKL…IEEE).

The protein belongs to the NUF2 family.

It localises to the chromosome. The protein localises to the centromere. It is found in the kinetochore. In terms of biological role, required for anchoring centrosomal cores to the nuclear periphery. Plays a role in chromosome segregation but is dispensable for centromere clustering. The sequence is that of Kinetochore protein NUF2 from Toxoplasma gondii (strain ATCC 50611 / Me49).